Consider the following 166-residue polypeptide: Lipoprotein signal peptidase (166 aa).

4 helical membrane-spanning segments follow: residues 9-29, 45-65, 71-91, and 99-119; these read ASGA…FDQL, ALTS…FGFL, WQRW…CYLL, and LFSL…IDRL. Catalysis depends on residues aspartate 126 and aspartate 144. Residues 135–155 traverse the membrane as a helical segment; it reads WHFPAFNLADSAITVGAVLLI.

Belongs to the peptidase A8 family.

The protein resides in the cell inner membrane. It catalyses the reaction Release of signal peptides from bacterial membrane prolipoproteins. Hydrolyzes -Xaa-Yaa-Zaa-|-(S,diacylglyceryl)Cys-, in which Xaa is hydrophobic (preferably Leu), and Yaa (Ala or Ser) and Zaa (Gly or Ala) have small, neutral side chains.. Its pathway is protein modification; lipoprotein biosynthesis (signal peptide cleavage). In terms of biological role, this protein specifically catalyzes the removal of signal peptides from prolipoproteins. The protein is Lipoprotein signal peptidase of Burkholderia vietnamiensis (strain G4 / LMG 22486) (Burkholderia cepacia (strain R1808)).